A 318-amino-acid chain; its full sequence is MPAGLPGQASVAVRLSCDVPPDARHHEPRPGMTDHPDTGNGIGLTGRPPRAIPDPAPRSSHGPAKVIAMCNQKGGVGKTTSTINLGAALGEYGRRVLLVDMDPQGALSAGLGVPHYELDKTIHNVLVEPRVSIDDVLIHSRVKNMDLVPSNIDLSAAEIQLVNEVGREQTLARALYPVLDRYDYVLIDCQPSLGLLTVNGLACTDGVIIPTECEFFSLRGLALLTDTVDKVRDRLNPKLDISGILITRYDPRTVNSREVMARVVERFGDLVFDTVITRTVRFPETSVAGEPITTWAPKSAGALAYRALARELIDRFGM.

The tract at residues 19–63 (VPPDARHHEPRPGMTDHPDTGNGIGLTGRPPRAIPDPAPRSSHGP) is disordered. The segment covering 21–37 (PDARHHEPRPGMTDHPD) has biased composition (basic and acidic residues). ATP is bound at residue 72–79 (QKGGVGKT).

Belongs to the ParA family.

Its function is as follows. May play a role in septum formation. This is an uncharacterized protein from Mycobacterium tuberculosis (strain CDC 1551 / Oshkosh).